A 398-amino-acid polypeptide reads, in one-letter code: Acetate kinase 1 (398 aa).

Asn-10 is a Mg(2+) binding site. Residue Lys-17 coordinates ATP. Arg-89 serves as a coordination point for substrate. Residue Asp-146 is the Proton donor/acceptor of the active site. Residues 206-210 (HLGNG), 281-283 (DCR), and 329-333 (GIGEN) contribute to the ATP site. Glu-384 serves as a coordination point for Mg(2+).

The protein belongs to the acetokinase family. Homodimer. Mg(2+) serves as cofactor. It depends on Mn(2+) as a cofactor.

The protein resides in the cytoplasm. The catalysed reaction is acetate + ATP = acetyl phosphate + ADP. It participates in metabolic intermediate biosynthesis; acetyl-CoA biosynthesis; acetyl-CoA from acetate: step 1/2. Catalyzes the formation of acetyl phosphate from acetate and ATP. Can also catalyze the reverse reaction. The chain is Acetate kinase 1 from Neisseria meningitidis serogroup A / serotype 4A (strain DSM 15465 / Z2491).